The following is a 478-amino-acid chain: Cytochrome c lysine N-methyltransferase 1 (478 aa).

Residues 32-284 (PCVSIERSQI…DRFEVFISYC (253 aa)) enclose the SET domain. An SET-like region spans residues 199–299 (TRAVVLRVYA…VHFKHTYGFF (101 aa)).

It belongs to the class V-like SAM-binding methyltransferase superfamily.

The protein resides in the cytoplasm. The protein localises to the cytosol. It carries out the reaction L-lysyl-[cytochrome c] + S-adenosyl-L-methionine = N(6)-methyl-L-lysyl-[cytochrome c] + S-adenosyl-L-homocysteine + H(+). Its function is as follows. Methyltransferase which mediates trimethylation of cytochrome c (CYC1). The sequence is that of Cytochrome c lysine N-methyltransferase 1 (CTM1) from Eremothecium gossypii (strain ATCC 10895 / CBS 109.51 / FGSC 9923 / NRRL Y-1056) (Yeast).